The primary structure comprises 421 residues: Adenosylhomocysteinase (421 aa).

2 residues coordinate substrate: aspartate 128 and glutamate 153. 154–156 provides a ligand contact to NAD(+); that stretch reads TTT. The substrate site is built by lysine 183 and aspartate 187. NAD(+) contacts are provided by residues asparagine 188, 217 to 222, glutamate 240, 296 to 298, and asparagine 343; these read GYGWCG and AGH.

The protein belongs to the adenosylhomocysteinase family. It depends on NAD(+) as a cofactor.

It is found in the cytoplasm. It catalyses the reaction S-adenosyl-L-homocysteine + H2O = L-homocysteine + adenosine. Its pathway is amino-acid biosynthesis; L-homocysteine biosynthesis; L-homocysteine from S-adenosyl-L-homocysteine: step 1/1. In terms of biological role, may play a key role in the regulation of the intracellular concentration of adenosylhomocysteine. This chain is Adenosylhomocysteinase, found in Thermococcus kodakarensis (strain ATCC BAA-918 / JCM 12380 / KOD1) (Pyrococcus kodakaraensis (strain KOD1)).